Here is a 61-residue protein sequence, read N- to C-terminus: Small ribosomal subunit protein uS14 (61 aa).

Residues cysteine 24, cysteine 27, cysteine 40, and cysteine 43 each coordinate Zn(2+).

Belongs to the universal ribosomal protein uS14 family. Zinc-binding uS14 subfamily. As to quaternary structure, part of the 30S ribosomal subunit. Contacts proteins S3 and S10. Zn(2+) serves as cofactor.

Functionally, binds 16S rRNA, required for the assembly of 30S particles and may also be responsible for determining the conformation of the 16S rRNA at the A site. This is Small ribosomal subunit protein uS14 from Syntrophobacter fumaroxidans (strain DSM 10017 / MPOB).